A 226-amino-acid polypeptide reads, in one-letter code: Phosphate propanoyltransferase (226 aa).

Val-44–Asn-46 contributes to the CoA binding site. Residues His-48 and His-50 each contribute to the Zn(2+) site. Met-72, Lys-90, and Arg-97 together coordinate CoA. Arg-103 contributes to the phosphate binding site. Glu-109 lines the Zn(2+) pocket. Phe-116 provides a ligand contact to CoA. Zn(2+) is bound by residues His-157, His-159, and His-204. Asn-211 is a CoA binding site.

The protein belongs to the PduL family. As to quaternary structure, full-length protein forms large oligomers. Homodimer, when purified in the absence of the encapsulation peptide (EP, residues 1-47). The EP may influence oligomerization. Zn(2+) is required as a cofactor.

The protein localises to the bacterial microcompartment. It catalyses the reaction propanoyl-CoA + phosphate = propanoyl phosphate + CoA. It participates in polyol metabolism; 1,2-propanediol degradation. Its function is as follows. Involved in 1,2-propanediol (1,2-PD) utilization within the bacterial microcompartment (BMC) dedicated to 1,2-PD degradation by catalyzing the conversion of propanoyl-CoA to propanoyl-phosphate. CoA is regenerated within the pdu BMC (for use by PduP) via this enzyme, although there must also be cofactor transport across the BMC. Directly targeted to the BMC. Phosphate is probably the first substrate to bind in the forward direction. CoA is probably the first substrate to bind in the reverse direction, and might bind to the enzyme as the BMC assembles, ensuring cofactor encapsulation. The protein is Phosphate propanoyltransferase of Rhodopseudomonas palustris (strain BisB18).